Reading from the N-terminus, the 111-residue chain is Ig kappa chain V-III region PC 2413 (111 aa).

Positions 1–23 are framework-1; that stretch reads DIVLTQSPASLAVSLGQRATISC. Cys-23 and Cys-92 form a disulfide bridge. Positions 24-38 are complementarity-determining-1; sequence RASESVVNYGVSLMH. A framework-2 region spans residues 39-53; sequence WFQQKPGQPPKLLIY. Positions 54–60 are complementarity-determining-2; the sequence is GASNRGS. The segment at 61–92 is framework-3; sequence GVPARFSGSGSGTDFSLIIHPMEEDDSAMYFC. The complementarity-determining-3 stretch occupies residues 93–101; that stretch reads HQTKEVPWT. Residues 102–111 form a framework-4 region; the sequence is FGGGTDLEIE.

The chain is Ig kappa chain V-III region PC 2413 from Mus musculus (Mouse).